The chain runs to 312 residues: MSSLRTADDTWDIATSVGSTAVMVAASRAAETERDEALIRDPYARLLVTGAGTGIWESVLDAKFVETVAAADAEAAAIFEHMNSYQAVRTHFFDAFFTAAAEAGIRQIVILASGLDSRAYRLDWPSGTTVYEIDQPKVLEYKSATLAEHGVEPVATRREVGIDLRHDWPAALRGAGFDPSRPTAWLAEGLLMYLPADAQDRLFEQITELSAPGSRVAAETAGVQAEDRRQQMRERFERIAEKFDMTASLDIQQLIYEDPDRADVADWLDAHGWTATAVSSQQEMRRLDRWALPADLTDDDAFSNFVTAEKLS.

Residues aspartate 134 and 163 to 164 (DL) each bind S-adenosyl-L-methionine.

This sequence belongs to the UPF0677 family.

Exhibits S-adenosyl-L-methionine-dependent methyltransferase activity. This chain is Putative S-adenosyl-L-methionine-dependent methyltransferase Mjls_0078, found in Mycobacterium sp. (strain JLS).